The chain runs to 557 residues: Dihydroxy-acid dehydratase (557 aa).

Residue Cys-49 participates in [2Fe-2S] cluster binding. Asp-81 is a Mg(2+) binding site. Cys-122 contacts [2Fe-2S] cluster. Mg(2+)-binding residues include Asp-123 and Lys-124. Lys-124 carries the N6-carboxylysine modification. Cys-194 contributes to the [2Fe-2S] cluster binding site. Glu-446 contacts Mg(2+). The active-site Proton acceptor is the Ser-472.

Belongs to the IlvD/Edd family. In terms of assembly, homodimer. [2Fe-2S] cluster serves as cofactor. Mg(2+) is required as a cofactor.

It carries out the reaction (2R)-2,3-dihydroxy-3-methylbutanoate = 3-methyl-2-oxobutanoate + H2O. The catalysed reaction is (2R,3R)-2,3-dihydroxy-3-methylpentanoate = (S)-3-methyl-2-oxopentanoate + H2O. It functions in the pathway amino-acid biosynthesis; L-isoleucine biosynthesis; L-isoleucine from 2-oxobutanoate: step 3/4. It participates in amino-acid biosynthesis; L-valine biosynthesis; L-valine from pyruvate: step 3/4. In terms of biological role, functions in the biosynthesis of branched-chain amino acids. Catalyzes the dehydration of (2R,3R)-2,3-dihydroxy-3-methylpentanoate (2,3-dihydroxy-3-methylvalerate) into 2-oxo-3-methylpentanoate (2-oxo-3-methylvalerate) and of (2R)-2,3-dihydroxy-3-methylbutanoate (2,3-dihydroxyisovalerate) into 2-oxo-3-methylbutanoate (2-oxoisovalerate), the penultimate precursor to L-isoleucine and L-valine, respectively. The chain is Dihydroxy-acid dehydratase from Prochlorococcus marinus (strain MIT 9215).